A 317-amino-acid polypeptide reads, in one-letter code: Thymidylate synthase (317 aa).

DUMP-binding positions include R24 and 179–180 (RR). C199 acts as the Nucleophile in catalysis. DUMP contacts are provided by residues 219 to 222 (RSAD), N230, and 260 to 262 (HIY). (6R)-5,10-methylene-5,6,7,8-tetrahydrofolate is bound at residue D222. (6R)-5,10-methylene-5,6,7,8-tetrahydrofolate is bound at residue A316.

It belongs to the thymidylate synthase family. Bacterial-type ThyA subfamily. Homodimer.

Its subcellular location is the cytoplasm. The enzyme catalyses dUMP + (6R)-5,10-methylene-5,6,7,8-tetrahydrofolate = 7,8-dihydrofolate + dTMP. It participates in pyrimidine metabolism; dTTP biosynthesis. Its function is as follows. Catalyzes the reductive methylation of 2'-deoxyuridine-5'-monophosphate (dUMP) to 2'-deoxythymidine-5'-monophosphate (dTMP) while utilizing 5,10-methylenetetrahydrofolate (mTHF) as the methyl donor and reductant in the reaction, yielding dihydrofolate (DHF) as a by-product. This enzymatic reaction provides an intracellular de novo source of dTMP, an essential precursor for DNA biosynthesis. The protein is Thymidylate synthase of Oceanobacillus iheyensis (strain DSM 14371 / CIP 107618 / JCM 11309 / KCTC 3954 / HTE831).